A 256-amino-acid polypeptide reads, in one-letter code: Major prion protein (256 aa).

An N-terminal signal peptide occupies residues 1 to 24 (MVKSHIGSWILVLFVAMWSDVGLC). The tract at residues 25 to 233 (KKRPKPGGGW…ESQAYYQRGA (209 aa)) is interaction with GRB2, ERI3 and SYN1. Residues 28–110 (PKPGGGWNTG…QWNKPSKPKT (83 aa)) form a disordered region. 5 consecutive repeat copies span residues 54 to 62 (PQGGGGWGQ), 63 to 70 (PHGGGWGQ), 71 to 78 (PHGGGWGQ), 79 to 86 (PHGGGWGQ), and 87 to 95 (PHGGGGWGQ). Positions 54-95 (PQGGGGWGQPHGGGWGQPHGGGWGQPHGGGWGQPHGGGGWGQ) are 5 X 8 AA tandem repeats of P-H-G-G-G-W-G-Q. A compositionally biased stretch (gly residues) spans 55–97 (QGGGGWGQPHGGGWGQPHGGGWGQPHGGGWGQPHGGGGWGQGG). Cu(2+)-binding residues include His64, Gly65, Gly66, His72, Gly73, Gly74, His80, Gly81, Gly82, His88, Gly90, and Gly91. Cys182 and Cys217 are disulfide-bonded. Residues Asn184 and Asn200 are each glycosylated (N-linked (GlcNAc...) asparagine). Ala233 carries GPI-anchor amidated alanine lipidation. Residues 234-256 (SVILFSSPPVILLISFLIFLIVG) constitute a propeptide, removed in mature form.

It belongs to the prion family. As to quaternary structure, monomer and homodimer. Has a tendency to aggregate into amyloid fibrils containing a cross-beta spine, formed by a steric zipper of superposed beta-strands. Soluble oligomers may represent an intermediate stage on the path to fibril formation. Copper binding may promote oligomerization. Interacts with GRB2, APP, ERI3/PRNPIP and SYN1. Mislocalized cytosolically exposed PrP interacts with MGRN1; this interaction alters MGRN1 subcellular location and causes lysosomal enlargement. Interacts with KIAA1191.

The protein localises to the cell membrane. It is found in the golgi apparatus. Functionally, its primary physiological function is unclear. Has cytoprotective activity against internal or environmental stresses. May play a role in neuronal development and synaptic plasticity. May be required for neuronal myelin sheath maintenance. May play a role in iron uptake and iron homeostasis. Soluble oligomers are toxic to cultured neuroblastoma cells and induce apoptosis (in vitro). Association with GPC1 (via its heparan sulfate chains) targets PRNP to lipid rafts. Also provides Cu(2+) or Zn(2+) for the ascorbate-mediated GPC1 deaminase degradation of its heparan sulfate side chains. This Budorcas taxicolor (Golden takin) protein is Major prion protein (PRNP).